Here is a 473-residue protein sequence, read N- to C-terminus: Aspartyl/glutamyl-tRNA(Asn/Gln) amidotransferase subunit B (473 aa).

Belongs to the GatB/GatE family. GatB subfamily. In terms of assembly, heterotrimer of A, B and C subunits.

The enzyme catalyses L-glutamyl-tRNA(Gln) + L-glutamine + ATP + H2O = L-glutaminyl-tRNA(Gln) + L-glutamate + ADP + phosphate + H(+). The catalysed reaction is L-aspartyl-tRNA(Asn) + L-glutamine + ATP + H2O = L-asparaginyl-tRNA(Asn) + L-glutamate + ADP + phosphate + 2 H(+). Its function is as follows. Allows the formation of correctly charged Asn-tRNA(Asn) or Gln-tRNA(Gln) through the transamidation of misacylated Asp-tRNA(Asn) or Glu-tRNA(Gln) in organisms which lack either or both of asparaginyl-tRNA or glutaminyl-tRNA synthetases. The reaction takes place in the presence of glutamine and ATP through an activated phospho-Asp-tRNA(Asn) or phospho-Glu-tRNA(Gln). The sequence is that of Aspartyl/glutamyl-tRNA(Asn/Gln) amidotransferase subunit B from Wolbachia pipientis subsp. Culex pipiens (strain wPip).